Here is a 158-residue protein sequence, read N- to C-terminus: MKFGCLSFRQPYAGFVLNGIKTVETRWRPLLSSQRNCTIAVHIAHRDWEGDAWRELLVERLGMTPAQIQALLRKGEKFGRGVIAGLVDIGETLQCPEDLTPDEVVELENQAVLTNLKQKYLTVISNPRWLLEPIPRKGGKDVFQVDIPEHLIPLGHEV.

The ASCH domain maps to 6 to 92; sequence LSFRQPYAGF…IAGLVDIGET (87 aa).

The protein belongs to the EOLA family. Interacts with MT2A. In terms of tissue distribution, expressed primarily in heart, skeletal muscle, kidney, liver and placenta. Relatively high level of expression in spleen, colon and small intestine. Almost no expression in brain, thymus, lung and peripheral blood leukocytes. Expressed in epithelial cells (at protein level).

May play a role in cell protection during the inflammatory response. In epithelial cells, negatively regulates IL6 production and apoptosis through the regulation of MT2A expression. This Homo sapiens (Human) protein is Protein EOLA1.